The sequence spans 313 residues: Adhesin MafA 1 (313 aa).

The N-terminal stretch at 1–14 (MKILLLLIPLVLTA) is a signal peptide. A lipid anchor (N-palmitoyl cysteine) is attached at Cys15. Cys15 carries S-diacylglycerol cysteine lipidation. Residues 282–298 (GDTTAQNRPDFKQNNGK) are compositionally biased toward polar residues. The interval 282 to 313 (GDTTAQNRPDFKQNNGKNPDVGNEVIRRRKGG) is disordered.

The protein belongs to the MafA family.

It localises to the cell outer membrane. This Neisseria meningitidis serogroup C / serotype 2a (strain ATCC 700532 / DSM 15464 / FAM18) protein is Adhesin MafA 1 (mafA1).